We begin with the raw amino-acid sequence, 497 residues long: Alkane hydroxylase MAH1 (497 aa).

A helical transmembrane segment spans residues 3–23; it reads MLGFYVTFIFFLVCLFTYFFL. Cysteine 444 is a heme binding site.

Belongs to the cytochrome P450 family. Heme serves as cofactor. Expressed in the expanding regions of the inflorescence stems, specifically to the epidermal pavement cells, petioles and siliques.

Its subcellular location is the endoplasmic reticulum membrane. Functionally, involved in the formation of secondary alcohols and ketones in stem cuticular wax. Catalyzes the hydroxylation of a methylene unit in the middle of alkane molecules to form secondary alcohols and possibly also a second hydroxylation leading to the corresponding ketones. This chain is Alkane hydroxylase MAH1, found in Arabidopsis thaliana (Mouse-ear cress).